Consider the following 479-residue polypeptide: Poly(A) polymerase catalytic subunit (479 aa).

Active-site residues include Asp202 and Asp204. 3 residues coordinate Ca(2+): Asp202, Asp204, and Asp253.

It belongs to the poxviridae poly(A) polymerase catalytic subunit family. Heterodimer of a large (catalytic) subunit and a small (regulatory) subunit.

It catalyses the reaction RNA(n) + ATP = RNA(n)-3'-adenine ribonucleotide + diphosphate. Its function is as follows. Polymerase that creates the 3'-poly(A) tail of mRNA's. In Homo sapiens (Human), this protein is Poly(A) polymerase catalytic subunit (OPG063).